The sequence spans 260 residues: Thymidylate synthase (260 aa).

It participates in pyrimidine metabolism; dTTP biosynthesis. Is able to catalyze the biosynthesis of dTMP using dUMP, tetrahydrofolate and formaldehyde in vitro, i.e. a reaction equivalent to that catalyzed by bacterial thymidylate synthases (EC 2.1.1.45). However, M.jannaschii like most methanogenic Archaea lacks folates, thus the physiological cosubstrate is unknown but is likely one of the non-methylated methanopterin biosynthetic intermediates. The protein is Thymidylate synthase of Methanocaldococcus jannaschii (strain ATCC 43067 / DSM 2661 / JAL-1 / JCM 10045 / NBRC 100440) (Methanococcus jannaschii).